A 151-amino-acid chain; its full sequence is 6,7-dimethyl-8-ribityllumazine synthase (151 aa).

5-amino-6-(D-ribitylamino)uracil is bound by residues phenylalanine 15, alanine 49–glutamate 51, and alanine 73–isoleucine 75. Glutamate 78–threonine 79 serves as a coordination point for (2S)-2-hydroxy-3-oxobutyl phosphate. Catalysis depends on histidine 81, which acts as the Proton donor. Phenylalanine 106 is a 5-amino-6-(D-ribitylamino)uracil binding site. (2S)-2-hydroxy-3-oxobutyl phosphate is bound at residue arginine 120.

This sequence belongs to the DMRL synthase family. In terms of assembly, forms an icosahedral capsid composed of 60 subunits, arranged as a dodecamer of pentamers.

It carries out the reaction (2S)-2-hydroxy-3-oxobutyl phosphate + 5-amino-6-(D-ribitylamino)uracil = 6,7-dimethyl-8-(1-D-ribityl)lumazine + phosphate + 2 H2O + H(+). It functions in the pathway cofactor biosynthesis; riboflavin biosynthesis; riboflavin from 2-hydroxy-3-oxobutyl phosphate and 5-amino-6-(D-ribitylamino)uracil: step 1/2. In terms of biological role, catalyzes the formation of 6,7-dimethyl-8-ribityllumazine by condensation of 5-amino-6-(D-ribitylamino)uracil with 3,4-dihydroxy-2-butanone 4-phosphate. This is the penultimate step in the biosynthesis of riboflavin. The polypeptide is 6,7-dimethyl-8-ribityllumazine synthase (Coxiella burnetii (strain Dugway 5J108-111)).